We begin with the raw amino-acid sequence, 299 residues long: HTH-type transcriptional regulator ArgP (299 aa).

An HTH lysR-type domain is found at 4 to 60; sequence LDYKLLLALDAVMQEQNFERAAQRLHITQSAISQRIKQLEQQFAEPLLIRSQPLQAT. A DNA-binding region (H-T-H motif) is located at residues 21-40; the sequence is FERAAQRLHITQSAISQRIK.

It belongs to the LysR transcriptional regulatory family. Homodimer.

In terms of biological role, controls the transcription of genes involved in arginine and lysine metabolism. This is HTH-type transcriptional regulator ArgP from Aeromonas salmonicida.